Reading from the N-terminus, the 218-residue chain is Adenylate kinase (218 aa).

10-15 contributes to the ATP binding site; the sequence is GAGKGT. The segment at 30 to 59 is NMP; that stretch reads STGDMLRAAVKAGSPLGLKVKDIMTSGGLV. AMP contacts are provided by residues T31, R36, 57–59, 85–88, and Q92; these read GLV and GFPR. Residues 122-159 are LID; it reads GRRVHEASGRVYHVKHNAPKTEGVDDETGEPLVQRDDD. Residues R123 and 132–133 each bind ATP; that span reads VY. AMP contacts are provided by R156 and R167. G203 serves as a coordination point for ATP.

It belongs to the adenylate kinase family. As to quaternary structure, monomer.

The protein resides in the cytoplasm. The enzyme catalyses AMP + ATP = 2 ADP. The protein operates within purine metabolism; AMP biosynthesis via salvage pathway; AMP from ADP: step 1/1. Functionally, catalyzes the reversible transfer of the terminal phosphate group between ATP and AMP. Plays an important role in cellular energy homeostasis and in adenine nucleotide metabolism. The chain is Adenylate kinase from Saccharophagus degradans (strain 2-40 / ATCC 43961 / DSM 17024).